The sequence spans 252 residues: 2-succinyl-6-hydroxy-2,4-cyclohexadiene-1-carboxylate synthase (252 aa).

It belongs to the AB hydrolase superfamily. MenH family. In terms of assembly, monomer.

It carries out the reaction 5-enolpyruvoyl-6-hydroxy-2-succinyl-cyclohex-3-ene-1-carboxylate = (1R,6R)-6-hydroxy-2-succinyl-cyclohexa-2,4-diene-1-carboxylate + pyruvate. The protein operates within quinol/quinone metabolism; 1,4-dihydroxy-2-naphthoate biosynthesis; 1,4-dihydroxy-2-naphthoate from chorismate: step 3/7. Its pathway is quinol/quinone metabolism; menaquinone biosynthesis. Functionally, catalyzes a proton abstraction reaction that results in 2,5-elimination of pyruvate from 2-succinyl-5-enolpyruvyl-6-hydroxy-3-cyclohexene-1-carboxylate (SEPHCHC) and the formation of 2-succinyl-6-hydroxy-2,4-cyclohexadiene-1-carboxylate (SHCHC). The polypeptide is 2-succinyl-6-hydroxy-2,4-cyclohexadiene-1-carboxylate synthase (Shigella boydii serotype 4 (strain Sb227)).